Reading from the N-terminus, the 1353-residue chain is Protein timeless homolog (1353 aa).

Disordered stretches follow at residues 798–825, 1150–1291, and 1306–1335; these read VAEDRAEDPDEEDPAEPYDSEQEEEEEV, KPTR…LEED, and GGSIAGNGITETRRDTSEEREDDDDEDPFT. The span at 802 to 825 shows a compositional bias: acidic residues; that stretch reads RAEDPDEEDPAEPYDSEQEEEEEV. 2 stretches are compositionally biased toward basic and acidic residues: residues 1150 to 1160 and 1168 to 1182; these read KPTRQVERHLE and ERSKKSEKNGKKFDD. Composition is skewed to acidic residues over residues 1183 to 1206 and 1217 to 1226; these read FLNDDDDDSENDVGGGSEDDEEEE and DSEDEEEHIE. Residues 1227–1239 are compositionally biased toward basic and acidic residues; the sequence is QEEAQKKLEKVAE. 3 stretches are compositionally biased toward acidic residues: residues 1261 to 1273, 1282 to 1291, and 1323 to 1332; these read DSSDESDDDDSAE, AEDDSDLEED, and EEREDDDDED.

This sequence belongs to the timeless family. Associates with the cohesin complex. Interacts with smc-1, smc-3, scc-1 and scc-3.

The protein resides in the nucleus. In terms of biological role, plays an important role in chromosome cohesion during both mitosis and meiosis. In prophase of meiosis, it is involved in the formation of the synaptonemal complex (SC) and specifically, in the diplotene and diakinesis phases of prophase, it stabilizes the association of homologous chromosomes during synapsis and sister chromatid cohesion. It regulates cohesin subunits to promote meiotic chromosome cohesion and localizes non-SMC (structural maintenance of chromosome) cohesin subunits to chromatin prior to or during pre-meiotic S phase. Implicated in influencing either the stability or loading of meiotic-specific cohesin subunit, rec8. Controls cell cycle exit and cell fusion to prevent the premature differentiation into adult cells. Specifically, regulates hypodermal seam cell identity. This is Protein timeless homolog from Caenorhabditis elegans.